The chain runs to 465 residues: MVIYDSSKKEYCSLEPLKNRHIKVYVCGPTVYDDAHLGHARSAIAFDLLRRTLNALGYKTTFMKNFTDIDDKIIKKMNETGKSLQEITSYYIQRYLEDMEALGVQRADIEPKATQNLDAMIDMIERLLQKECAYQTPNGDIYFDTSKDEKYCTLSHKCDEESMSRIEPNPDKKNPADFALWKRCKGEGDVCFDSPFGKGRPGWHIECSAMIDKHLAYHDTPFQIDIHAGGADLLFPHHENEAAQTRCACNQELAKYWMHNGFVTISGEKMSKSLGNSFFIKDALKVYDGEILRFYLLSTHYRSDLNFNEEDLLASKKRLDKLYRLKKRVYGVQASTPQKEFVDELLQALSQDLNISKTLAAIDQFIAYANEHLDNNPKDKAFKKQIVANIEYISKLLGIGHKDAYSYFHLGISEEEKQKIEELIEKRTTAKKEKNFQLADSIREELRSMGIAIMDTPQGTLWEKI.

Cysteine 27 contributes to the Zn(2+) binding site. The 'HIGH' region signature appears at 29 to 39 (PTVYDDAHLGH). 3 residues coordinate Zn(2+): cysteine 207, histidine 237, and glutamate 241. The short motif at 269–273 (KMSKS) is the 'KMSKS' region element. An ATP-binding site is contributed by lysine 272.

This sequence belongs to the class-I aminoacyl-tRNA synthetase family. In terms of assembly, monomer. Zn(2+) is required as a cofactor.

The protein resides in the cytoplasm. It catalyses the reaction tRNA(Cys) + L-cysteine + ATP = L-cysteinyl-tRNA(Cys) + AMP + diphosphate. The sequence is that of Cysteine--tRNA ligase from Nitratiruptor sp. (strain SB155-2).